The following is a 386-amino-acid chain: Leupaxin (386 aa).

The residue at position 1 (M1) is an N-acetylmethionine. Residues 3 to 15 carry the LD motif 1 motif; the sequence is ELDALLEELERST. The disordered stretch occupies residues 13 to 41; the sequence is RSTLQDSDEYSNPAPLPLDQHSRKETNLD. Position 19 is a phosphoserine (S19). Y22 carries the post-translational modification Phosphotyrosine. Phosphoserine is present on S54. The residue at position 62 (Y62) is a Phosphotyrosine. 2 short sequence motifs (LD motif) span residues 70-82 and 92-103; these read NVYSEAQEPKESP and QLDELMAHLTEM. Phosphotyrosine; by LYN is present on Y72. Residue S81 is modified to Phosphoserine. 4 consecutive LIM zinc-binding domains span residues 150–208, 209–267, 268–326, and 327–386; these read GHCA…QLFS, PRCA…AMFS, PKCG…HRRG, and TLCH…LFPL.

The protein belongs to the paxillin family. In terms of assembly, interacts with PTPN22. Interacts with unphosphorylated ITGA4. Interacts with PTK2B/PYK2, PTPN12, AR and SRF. Interacts (via LD motif 3) with LYN and the interaction is induced upon B-cell antigen receptor (BCR) activation. Interacts (via LD motif 3) with PTK2/FAK. In terms of processing, phosphorylated on tyrosine residues. Phosphorylation on Tyr-72 is important for its inhibitory function. Bombesin stimulates phosphorylation on Tyr-22, Tyr-62 and Tyr-72. As to expression, macrophages, monocytes and osteoclasts (at protein level). Strongly expressed in cells and tissues of hematopoietic origin. Highest expression in lymphoid tissues such as spleen, lymph node, thymus and appendix and in the vascular smooth muscle. Lower levels in bone marrow and fetal liver. Also expressed in peripheral blood lymphocytes and a number of hematopoietic cell lines. Very low levels found in epithelial cell lines. Expressed in prostate cancer (PCa) cells and its expression intensity is directly linked to PCa progression.

It is found in the cytoplasm. It localises to the cell junction. The protein localises to the focal adhesion. Its subcellular location is the nucleus. The protein resides in the perinuclear region. It is found in the cell projection. It localises to the podosome. The protein localises to the cell membrane. Functionally, transcriptional coactivator for androgen receptor (AR) and serum response factor (SRF). Contributes to the regulation of cell adhesion, spreading and cell migration and acts as a negative regulator in integrin-mediated cell adhesion events. Suppresses the integrin-induced tyrosine phosphorylation of paxillin (PXN). May play a critical role as an adapter protein in the formation of the adhesion zone in osteoclasts. Negatively regulates B-cell antigen receptor (BCR) signaling. This chain is Leupaxin (LPXN), found in Homo sapiens (Human).